The following is a 680-amino-acid chain: Tumor protein 63 (680 aa).

The interval 1 to 107 is transcription activation; the sequence is MNFETSRCAT…MQDSDLSDPM (107 aa). A compositionally biased stretch (polar residues) spans 123-157; the sequence is QIQNGSSSTSPYNTDHAQNSVTAPSPYAQPSSTFD. Residues 123–171 form a disordered region; it reads QIQNGSSSTSPYNTDHAQNSVTAPSPYAQPSSTFDALSPSPAIPSNTDY. Residues 170-362 mediate DNA binding; the sequence is DYPGPHSFDV…KADEDSIRKQ (193 aa). Cys244, His247, Cys308, and Cys312 together coordinate Zn(2+). A compositionally biased stretch (basic and acidic residues) spans 351–360; it reads DRKADEDSIR. Disordered regions lie at residues 351 to 393 and 436 to 472; these read DRKA…IKKR and RQQQQQQHQHLLQKQTSMQSQSSYGNSSPPLNKMNSM. An interaction with HIPK2 region spans residues 352–388; it reads RKADEDSIRKQQVSDSAKNGDGTKRPFRQNTHGIQMT. Positions 379–389 are enriched in polar residues; that stretch reads RQNTHGIQMTS. The oligomerization stretch occupies residues 394–443; sequence RSPDDELLYLPVRGRETYEMLLKIKESLELMQYLPQHTIETYRQQQQQQH. Low complexity predominate over residues 437–463; that stretch reads QQQQQQHQHLLQKQTSMQSQSSYGNSS. Residues 541-607 form the SAM domain; sequence PPYPTDCSIV…WKGILDHRQL (67 aa). The tract at residues 610–680 is transactivation inhibition; that stretch reads FSSPPHLLRT…KQQRIKEEGE (71 aa). Lys676 is covalently cross-linked (Glycyl lysine isopeptide (Lys-Gly) (interchain with G-Cter in SUMO)).

The protein belongs to the p53 family. In terms of assembly, binds DNA as a homotetramer. Isoform composition of the tetramer may determine transactivation activity. Interacts with HIPK2. Interacts with SSRP1, leading to stimulate coactivator activity. Interacts with PDS5A. Interacts (via activation domain) with NOC2L. Interacts with WWP1. It depends on Zn(2+) as a cofactor. Post-translationally, may be sumoylated. In terms of processing, ubiquitinated. Polyubiquitination involves WWP1 and leads to proteasomal degradation of this protein. Widely expressed, notably in thymus, prostate, placenta and skeletal muscle, although the precise isoform varies according to tissue type. Progenitor cell layers of skin, breast and prostate express high levels of DeltaN-type isoforms.

It is found in the nucleus. Its function is as follows. Acts as a sequence specific DNA binding transcriptional activator or repressor. The isoforms contain a varying set of transactivation and auto-regulating transactivation inhibiting domains thus showing an isoform specific activity. May be required in conjunction with TP73/p73 for initiation of p53/TP53 dependent apoptosis in response to genotoxic insults and the presence of activated oncogenes. Involved in Notch signaling by probably inducing JAG1 and JAG2. Activates transcription of the p21 promoter. Activates RIPK4 transcription. Plays a role in the regulation of epithelial morphogenesis. The ratio of DeltaN-type and TA*-type isoforms may govern the maintenance of epithelial stem cell compartments and regulate the initiation of epithelial stratification from the undifferentiated embryonal ectoderm. Required for limb formation from the apical ectodermal ridge. The sequence is that of Tumor protein 63 (Tp63) from Mus musculus (Mouse).